The chain runs to 1049 residues: Carbamoyl phosphate synthase large chain (1049 aa).

The interval 1-399 is carboxyphosphate synthetic domain; sequence MRESVRKVLV…SLQKAVRMLD (399 aa). The ATP site is built by arginine 127, arginine 167, glycine 173, glycine 174, lysine 206, leucine 208, glutamate 213, glycine 239, valine 240, histidine 241, glutamine 282, and glutamate 296. Residues 131–325 form the ATP-grasp 1 domain; it reads RETMINVGLP…LAYVSAKLAL (195 aa). Mg(2+) contacts are provided by glutamine 282, glutamate 296, and asparagine 298. Glutamine 282, glutamate 296, and asparagine 298 together coordinate Mn(2+). Positions 400–548 are oligomerization domain; that stretch reads IGEPGVVGGK…LTYNGTEDDI (149 aa). Positions 549 to 930 are carbamoyl phosphate synthetic domain; sequence EFSEAGNKLL…LKSWLSSSPN (382 aa). The ATP-grasp 2 domain occupies 674-864; that stretch reads SKLLDKLGIK…IISLALDGIL (191 aa). ATP contacts are provided by arginine 710, lysine 749, leucine 751, glutamate 756, glycine 780, valine 781, histidine 782, serine 783, glutamine 823, and glutamate 835. Residues glutamine 823, glutamate 835, and asparagine 837 each coordinate Mg(2+). Mn(2+) contacts are provided by glutamine 823, glutamate 835, and asparagine 837. Residues 930 to 1049 form the MGS-like domain; sequence NKIPNKEGIA…YEISEYGAGI (120 aa). Residues 931 to 1049 are allosteric domain; sequence KIPNKEGIAL…YEISEYGAGI (119 aa).

The protein belongs to the CarB family. In terms of assembly, composed of two chains; the small (or glutamine) chain promotes the hydrolysis of glutamine to ammonia, which is used by the large (or ammonia) chain to synthesize carbamoyl phosphate. Tetramer of heterodimers (alpha,beta)4. It depends on Mg(2+) as a cofactor. Mn(2+) serves as cofactor.

It carries out the reaction hydrogencarbonate + L-glutamine + 2 ATP + H2O = carbamoyl phosphate + L-glutamate + 2 ADP + phosphate + 2 H(+). The enzyme catalyses hydrogencarbonate + NH4(+) + 2 ATP = carbamoyl phosphate + 2 ADP + phosphate + 2 H(+). It functions in the pathway amino-acid biosynthesis; L-arginine biosynthesis; carbamoyl phosphate from bicarbonate: step 1/1. The protein operates within pyrimidine metabolism; UMP biosynthesis via de novo pathway; (S)-dihydroorotate from bicarbonate: step 1/3. Its function is as follows. Large subunit of the glutamine-dependent carbamoyl phosphate synthetase (CPSase). CPSase catalyzes the formation of carbamoyl phosphate from the ammonia moiety of glutamine, carbonate, and phosphate donated by ATP, constituting the first step of 2 biosynthetic pathways, one leading to arginine and/or urea and the other to pyrimidine nucleotides. The large subunit (synthetase) binds the substrates ammonia (free or transferred from glutamine from the small subunit), hydrogencarbonate and ATP and carries out an ATP-coupled ligase reaction, activating hydrogencarbonate by forming carboxy phosphate which reacts with ammonia to form carbamoyl phosphate. This chain is Carbamoyl phosphate synthase large chain, found in Sulfurisphaera tokodaii (strain DSM 16993 / JCM 10545 / NBRC 100140 / 7) (Sulfolobus tokodaii).